The sequence spans 370 residues: tRNA-specific 2-thiouridylase MnmA (370 aa).

ATP-binding positions include 11–18 (GMSGGVDS) and methionine 37. Residues 97–99 (NPD) are interaction with target base in tRNA. Cysteine 102 functions as the Nucleophile in the catalytic mechanism. An intrachain disulfide couples cysteine 102 to cysteine 199. Glycine 126 serves as a coordination point for ATP. The interaction with tRNA stretch occupies residues 149–151 (KDQ). Cysteine 199 serves as the catalytic Cysteine persulfide intermediate. Positions 307-308 (RY) are interaction with tRNA.

This sequence belongs to the MnmA/TRMU family.

The protein resides in the cytoplasm. The catalysed reaction is S-sulfanyl-L-cysteinyl-[protein] + uridine(34) in tRNA + AH2 + ATP = 2-thiouridine(34) in tRNA + L-cysteinyl-[protein] + A + AMP + diphosphate + H(+). In terms of biological role, catalyzes the 2-thiolation of uridine at the wobble position (U34) of tRNA, leading to the formation of s(2)U34. In Staphylococcus haemolyticus (strain JCSC1435), this protein is tRNA-specific 2-thiouridylase MnmA.